Here is a 182-residue protein sequence, read N- to C-terminus: Isopentenyl-diphosphate Delta-isomerase (182 aa).

Positions 25 and 32 each coordinate Mn(2+). Cys67 is a catalytic residue. Mn(2+) is bound at residue His69. Glu87 is a binding site for Mg(2+). Mn(2+)-binding residues include Glu114 and Glu116. Glu116 is a catalytic residue.

The protein belongs to the IPP isomerase type 1 family. As to quaternary structure, homodimer. Mg(2+) serves as cofactor. Mn(2+) is required as a cofactor.

It is found in the cytoplasm. It carries out the reaction isopentenyl diphosphate = dimethylallyl diphosphate. Its pathway is isoprenoid biosynthesis; dimethylallyl diphosphate biosynthesis; dimethylallyl diphosphate from isopentenyl diphosphate: step 1/1. Catalyzes the 1,3-allylic rearrangement of the homoallylic substrate isopentenyl (IPP) to its highly electrophilic allylic isomer, dimethylallyl diphosphate (DMAPP). The protein is Isopentenyl-diphosphate Delta-isomerase of Escherichia coli (strain K12 / MC4100 / BW2952).